We begin with the raw amino-acid sequence, 104 residues long: Circadian clock oscillator protein KaiB (104 aa).

The protein belongs to the KaiB family. As to quaternary structure, the KaiABC complex composition changes during the circadian cycle to control KaiC phosphorylation. Complexes KaiC(6), KaiA(2-4):KaiC(6), KaiB(6):KaiC(6) and KaiC(6):KaiB(6):KaiA(12) are among the most important forms, many form cooperatively. Undergoes a major conformational rearrangment; in the free state forms homotetramers as a dimer of dimers. When bound to the CI domain of KaiC switches to a monomeric thioredoxin-fold (KaiB(fs)). KaiB(fs) binds CikA, leading it to dephosphorylate phospho-RpaA.

Functionally, key component of the KaiABC oscillator complex, which constitutes the main circadian regulator in cyanobacteria. Complex composition changes during the circadian cycle to control KaiC phosphorylation. KaiA stimulates KaiC autophosphorylation, while KaiB sequesters KaiA, leading to KaiC autodephosphorylation. Phospho-Ser-431 KaiC accumulation triggers binding of KaiB to form the KaiB(6):KaiC(6) complex, leading to changes in output regulators CikA and SasA. KaiB switches to a thioredoxin-like fold (KaiB(fs)) when bound to KaiC. KaiB(6):KaiC(6) formation exposes a site for KaiA binding that sequesters KaiA from KaiC, making the KaiC(6):KaiB(6):KaiA(12) complex that results in KaiC autodephosphorylation. In terms of biological role, a metamorphic protein which reversibly switches between an inactive tetrameric fold and a rare, thioredoxin-like monomeric fold (KaiB(fs)). KaiB(fs) binds phospho-KaiC, KaiA and CikA. KaiA and CikA compete for binding to KaiB(fs), and KaiB(fs) and SasA compete for binding to KaiC, thus the clock oscillator and output signal pathway are tightly coupled. This is Circadian clock oscillator protein KaiB from Picosynechococcus sp. (strain ATCC 27264 / PCC 7002 / PR-6) (Agmenellum quadruplicatum).